The primary structure comprises 106 residues: Iron-sulfur cluster assembly protein CyaY (106 aa).

Belongs to the frataxin family.

Its function is as follows. Involved in iron-sulfur (Fe-S) cluster assembly. May act as a regulator of Fe-S biogenesis. This is Iron-sulfur cluster assembly protein CyaY from Klebsiella pneumoniae subsp. pneumoniae (strain ATCC 700721 / MGH 78578).